Here is a 253-residue protein sequence, read N- to C-terminus: Thiamine import ATP-binding protein ThiQ (253 aa).

The ABC transporter domain occupies 8 to 236 (VRLDKVSFSY…AGPEAFRRYI (229 aa)). 38-45 (GPSGSGKS) contacts ATP.

The protein belongs to the ABC transporter superfamily. Thiamine importer (TC 3.A.1.19.1) family. In terms of assembly, the complex is composed of two ATP-binding proteins (ThiQ), two transmembrane proteins (ThiP) and a solute-binding protein (ThiB).

It localises to the cell inner membrane. It carries out the reaction thiamine(out) + ATP + H2O = thiamine(in) + ADP + phosphate + H(+). In terms of biological role, part of the ABC transporter complex ThiBPQ involved in thiamine import. Responsible for energy coupling to the transport system. The polypeptide is Thiamine import ATP-binding protein ThiQ (Mesorhizobium japonicum (strain LMG 29417 / CECT 9101 / MAFF 303099) (Mesorhizobium loti (strain MAFF 303099))).